The following is a 407-amino-acid chain: MSVLITGVGVVAPNGLGLAPYWSAVLDGRHGLGPVTRFDVSRYPATLAGQIDDFHAPDHIPGRLLPQTDPSTRLALTAADWALQDAKADPESLTDYDMGVVTANACGGFDFTHREFRKLWSEGPKSVSVYESFAWFYAVNTGQISIRHGMRGPSSALVAEQAGGLDALGHARRTIRRGTPLVVSGGVDSALDPWGWVSQIASGRISTATDPDRAYLPFDERAAGYVPGEGGAILVLEDSAAAEARGRHDAYGELAGCASTFDPAPGSGRPAGLERAIRLALNDAGTGPEDVDVVFADGAGVPELDAAEARAIGRVFGREGVPVTVPKTTTGRLYSGGGPLDVVTALMSLREGVIAPTAGVTSVPREYGIDLVLGEPRSTAPRTALVLARGRWGFNSAAVLRRFAPTP.

Residues 1–402 (MSVLITGVGV…GFNSAAVLRR (402 aa)) form the Ketosynthase family 3 (KS3) domain.

This sequence belongs to the thiolase-like superfamily. Beta-ketoacyl-ACP synthases family.

This is Actinorhodin polyketide putative beta-ketoacyl synthase 2 from Streptomyces coelicolor (strain ATCC BAA-471 / A3(2) / M145).